The following is a 298-amino-acid chain: GTPase Era (298 aa).

The 168-residue stretch at 7–174 folds into the Era-type G domain; it reads RSGFVSIIGR…VELVRKALPQ (168 aa). Residues 15–22 are G1; the sequence is GRPNVGKS. GTP is bound at residue 15–22; sequence GRPNVGKS. The tract at residues 41-45 is G2; the sequence is QTTRN. The G3 stretch occupies residues 62-65; that stretch reads DTPG. Residues 62–66 and 124–127 contribute to the GTP site; these read DTPGI and NKVD. Positions 124–127 are G4; it reads NKVD. A G5 region spans residues 153 to 155; sequence ISA. The region spanning 205-283 is the KH type-2 domain; sequence TRDEVPYATA…FLELFVRVRK (79 aa).

This sequence belongs to the TRAFAC class TrmE-Era-EngA-EngB-Septin-like GTPase superfamily. Era GTPase family. Monomer.

The protein resides in the cytoplasm. Its subcellular location is the cell inner membrane. An essential GTPase that binds both GDP and GTP, with rapid nucleotide exchange. Plays a role in 16S rRNA processing and 30S ribosomal subunit biogenesis and possibly also in cell cycle regulation and energy metabolism. The protein is GTPase Era of Geobacter metallireducens (strain ATCC 53774 / DSM 7210 / GS-15).